An 843-amino-acid polypeptide reads, in one-letter code: Protein translocase subunit SecA (843 aa).

ATP contacts are provided by residues Gln-91, 109–113 (GEGKT), and Asp-498. Residues 796-825 (DFGKAEHVSAEDGKEKAKAEPYVKDEHIGR) are compositionally biased toward basic and acidic residues. Positions 796–833 (DFGKAEHVSAEDGKEKAKAEPYVKDEHIGRNDPCPCGS) are disordered. Zn(2+) is bound by residues Cys-829, Cys-831, Cys-840, and His-841.

It belongs to the SecA family. Monomer and homodimer. Part of the essential Sec protein translocation apparatus which comprises SecA, SecYEG and auxiliary proteins SecDF. Other proteins may also be involved. It depends on Zn(2+) as a cofactor.

The protein localises to the cell membrane. Its subcellular location is the cytoplasm. It catalyses the reaction ATP + H2O + cellular proteinSide 1 = ADP + phosphate + cellular proteinSide 2.. In terms of biological role, part of the Sec protein translocase complex. Interacts with the SecYEG preprotein conducting channel. Has a central role in coupling the hydrolysis of ATP to the transfer of proteins into and across the cell membrane, serving as an ATP-driven molecular motor driving the stepwise translocation of polypeptide chains across the membrane. This is Protein translocase subunit SecA from Staphylococcus saprophyticus subsp. saprophyticus (strain ATCC 15305 / DSM 20229 / NCIMB 8711 / NCTC 7292 / S-41).